A 405-amino-acid polypeptide reads, in one-letter code: Scramblase ANY1 (405 aa).

The Cytoplasmic portion of the chain corresponds to 1-51; it reads MSTTGPLDATLIRDVAVATATKASYDMSDTLYSYLPKVDQFYIPEWLTMQF. Residues 52–72 traverse the membrane as a helical segment; sequence IANNLISFTPLFSYGTTIISI. Residues 73–76 lie on the Lumenal side of the membrane; sequence EKCK. Residues 77 to 97 traverse the membrane as a helical segment; it reads TALGFSIDICATMLIASILRI. At 98–103 the chain is on the cytoplasmic side; that stretch reads SYYLIT. A helical transmembrane segment spans residues 104–124; the sequence is PYEITLLRQSLVMIFIQLILL. Topologically, residues 125 to 177 are lumenal; sequence RTSLKYRPDEYKYQNLTDVESLSHLIHDIWFEFFSCINRPKFLSEDWKNLIKS. A helical transmembrane segment spans residues 178 to 198; it reads LSFTNLLKFSFKIFLAFFYKI. The Cytoplasmic portion of the chain corresponds to 199–223; the sequence is LKFFDPNFKRIGAFWQWDDDKNFWR. Residues 224 to 244 form a helical membrane-spanning segment; the sequence is FLALFATVQILVTFFISNILN. Over 245–254 the chain is Lumenal; sequence WDSLAQGLGS. The 58-residue stretch at 252–309 folds into the PQ-loop domain; sequence LGSIIGSLGLLVESLLPLPQIAILYKLKSVQGFKLILLVSWLCGDTLKITYLIFGAKN. A helical membrane pass occupies residues 255–275; it reads IIGSLGLLVESLLPLPQIAIL. Topologically, residues 276–283 are cytoplasmic; sequence YKLKSVQG. The chain crosses the membrane as a helical span at residues 284–306; that stretch reads FKLILLVSWLCGDTLKITYLIFG. Topologically, residues 307–312 are lumenal; sequence AKNISA. A helical transmembrane segment spans residues 313–335; the sequence is LFVIFALFQMSLDFYIGGQYIYY. Over 336–405 the chain is Cytoplasmic; it reads RYYYPKLRHQ…GKSQAQAVTL (70 aa). The segment at 379-405 is disordered; it reads LKQDSNDTSDSPQDDQVGKSQAQAVTL. The segment covering 396-405 has biased composition (polar residues); the sequence is GKSQAQAVTL.

As to quaternary structure, interacts with NEO1.

The protein localises to the golgi apparatus membrane. Its subcellular location is the late endosome membrane. Functionally, phospholipid scramblase that transports phosphatidylserine (PS) and phosphatidylethalonamine (PE) bidirectionally from one leaflet to the other of the phospholipid bilayer to at least partially collapse the membrane asymmetry established by NEO1 and other flippases. The PS scramblase activity has been disputed. Functions in the trafficking pathway from endosomes to the trans-Golgi network (TGN). This is Scramblase ANY1 from Saccharomyces cerevisiae (strain ATCC 204508 / S288c) (Baker's yeast).